Reading from the N-terminus, the 357-residue chain is Ribosomal RNA large subunit methyltransferase M (357 aa).

Residues Ser-183, 216–219, Asp-235, Asp-255, and Asp-271 contribute to the S-adenosyl-L-methionine site; that span reads APGG. Lys-300 (proton acceptor) is an active-site residue.

This sequence belongs to the class I-like SAM-binding methyltransferase superfamily. RNA methyltransferase RlmE family. RlmM subfamily. As to quaternary structure, monomer.

The protein resides in the cytoplasm. It catalyses the reaction cytidine(2498) in 23S rRNA + S-adenosyl-L-methionine = 2'-O-methylcytidine(2498) in 23S rRNA + S-adenosyl-L-homocysteine + H(+). Catalyzes the 2'-O-methylation at nucleotide C2498 in 23S rRNA. In Pseudomonas fluorescens (strain ATCC BAA-477 / NRRL B-23932 / Pf-5), this protein is Ribosomal RNA large subunit methyltransferase M.